The chain runs to 242 residues: Glutamate transport ATP-binding protein GluA (242 aa).

One can recognise an ABC transporter domain in the interval 2–236 (IKMTGVQKYF…PKSDRAKDFL (235 aa)). 34–41 (GPSGSGKS) provides a ligand contact to ATP.

The protein belongs to the ABC transporter superfamily. The complex is composed of two ATP-binding proteins (GluA), two transmembrane proteins (GluC and GluD) and a solute-binding protein (GluB).

Its subcellular location is the cell membrane. The enzyme catalyses a polar amino acid(out) + ATP + H2O = a polar amino acid(in) + ADP + phosphate + H(+). The catalysed reaction is L-glutamate(out) + ATP + H2O = L-glutamate(in) + ADP + phosphate + H(+). Its function is as follows. Part of the ABC transporter complex GluABCD involved in glutamate uptake. Probably responsible for energy coupling to the transport system. This is Glutamate transport ATP-binding protein GluA from Corynebacterium glutamicum (strain ATCC 13032 / DSM 20300 / JCM 1318 / BCRC 11384 / CCUG 27702 / LMG 3730 / NBRC 12168 / NCIMB 10025 / NRRL B-2784 / 534).